The chain runs to 319 residues: ATP-dependent 6-phosphofructokinase (319 aa).

Glycine 11 lines the ATP pocket. Residue 21–25 (RAVVR) participates in ADP binding. ATP contacts are provided by residues 72–73 (RS) and 102–105 (GDGS). Mg(2+) is bound at residue aspartate 103. Residue 125 to 127 (TID) coordinates substrate. The active-site Proton acceptor is aspartate 127. Arginine 154 is an ADP binding site. Substrate-binding positions include arginine 162 and 169–171 (MGR). ADP-binding positions include 185–187 (GAE), arginine 211, and 213–215 (KKH). Residues glutamate 222, arginine 243, and 249 to 252 (HIQR) contribute to the substrate site.

The protein belongs to the phosphofructokinase type A (PFKA) family. ATP-dependent PFK group I subfamily. Prokaryotic clade 'B1' sub-subfamily. As to quaternary structure, homotetramer. Mg(2+) is required as a cofactor.

It localises to the cytoplasm. The enzyme catalyses beta-D-fructose 6-phosphate + ATP = beta-D-fructose 1,6-bisphosphate + ADP + H(+). It functions in the pathway carbohydrate degradation; glycolysis; D-glyceraldehyde 3-phosphate and glycerone phosphate from D-glucose: step 3/4. Its activity is regulated as follows. Allosterically activated by ADP and other diphosphonucleosides, and allosterically inhibited by phosphoenolpyruvate. In terms of biological role, catalyzes the phosphorylation of D-fructose 6-phosphate to fructose 1,6-bisphosphate by ATP, the first committing step of glycolysis. This chain is ATP-dependent 6-phosphofructokinase, found in Oceanobacillus iheyensis (strain DSM 14371 / CIP 107618 / JCM 11309 / KCTC 3954 / HTE831).